The primary structure comprises 78 residues: UPF0335 protein A1C_00850 (78 aa).

It belongs to the UPF0335 family.

This Rickettsia akari (strain Hartford) protein is UPF0335 protein A1C_00850.